The primary structure comprises 248 residues: Mannose-binding protein C (248 aa).

An N-terminal signal peptide occupies residues 1-20 (MSLFPSLPLLLLSVVATSYS). The Collagen-like domain occupies 42-99 (GINGFPGKDGRDGTKGEKGEPGQGLRGLQGPPGKLGPPGNPGPSGSPGPKGQKGDPGE). A disordered region spans residues 43 to 111 (INGFPGKDGR…DCDSSLAASE (69 aa)). P47 carries the post-translational modification 4-hydroxyproline. A compositionally biased stretch (basic and acidic residues) spans 49 to 61 (KDGRDGTKGEKGE). P73, P79, P82, and P88 each carry 4-hydroxyproline. Residues 75–87 (KLGPPGNPGPSGS) are compositionally biased toward pro residues. Positions 112–130 (RKALQTEMAHIKKWLTFSL) form a coiled coil. The C-type lectin domain maps to 134-245 (VGNKFFLTNG…CSSSHLALCE (112 aa)). Intrachain disulfides connect C155/C244 and C222/C236.

Oligomeric complex of 3 or more homotrimers. Interacts with MASP1 and MASP2. Interacts with MEP1A and MEP1B and may inhibit their catalytic activity. Post-translationally, hydroxylation on proline residues within the sequence motif, GXPG, is most likely to be 4-hydroxy as this fits the requirement for 4-hydroxylation in vertebrates.

It localises to the secreted. Its function is as follows. Calcium-dependent lectin involved in innate immune defense. Binds mannose, fucose and N-acetylglucosamine on different microorganisms and activates the lectin complement pathway. Binds to late apoptotic cells, as well as to apoptotic blebs and to necrotic cells, but not to early apoptotic cells, facilitating their uptake by macrophages. This Trachypithecus obscurus (Dusky leaf-monkey) protein is Mannose-binding protein C (MBL2).